Here is an 810-residue protein sequence, read N- to C-terminus: Phenylalanine--tRNA ligase beta subunit (810 aa).

The tRNA-binding domain occupies 39–154; sequence APPTEKIVVG…EGTPVGQDIR (116 aa). A B5 domain is found at 405–480; it reads PQRAPVSMRA…RIYGFEKIPA (76 aa). Asp458, Asp464, Glu467, and Glu468 together coordinate Mg(2+). An FDX-ACB domain is found at 707–809; it reads SKFPPVRRDI…MARVYGARLR (103 aa).

Belongs to the phenylalanyl-tRNA synthetase beta subunit family. Type 1 subfamily. Tetramer of two alpha and two beta subunits. Mg(2+) serves as cofactor.

Its subcellular location is the cytoplasm. It catalyses the reaction tRNA(Phe) + L-phenylalanine + ATP = L-phenylalanyl-tRNA(Phe) + AMP + diphosphate + H(+). This chain is Phenylalanine--tRNA ligase beta subunit, found in Burkholderia pseudomallei (strain 1710b).